The chain runs to 627 residues: (+)-3-carene synthase 1, chloroplastic (627 aa).

A chloroplast-targeting transit peptide spans 1-36 (MSVISIVPLASKPCLYKSFISSTHEPKALRRPISTV). Mg(2+) contacts are provided by aspartate 378, aspartate 382, and aspartate 530. The DDXXD motif motif lies at 378-382 (DDMYD).

This sequence belongs to the terpene synthase family. Tpsd subfamily. Mg(2+) serves as cofactor. Mn(2+) is required as a cofactor.

The protein localises to the plastid. It localises to the chloroplast. The catalysed reaction is (2E)-geranyl diphosphate = (+)-car-3-ene + diphosphate. The protein operates within terpene metabolism; oleoresin biosynthesis. Its function is as follows. Terpene synthase (TPS) involved in the biosynthesis of monoterpene natural products included in conifer oleoresin secretions and volatile emissions; these compounds contribute to biotic and abiotic stress defense against herbivores (e.g. insect attack by white pine weevil P.strobi) and pathogens. Catalyzes the conversion of (2E)-geranyl diphosphate (GPP) to (+)-car-3-ene. The chain is (+)-3-carene synthase 1, chloroplastic from Picea sitchensis (Sitka spruce).